Consider the following 447-residue polypeptide: Probable butyrate:acetyl-CoA coenzyme A-transferase (447 aa).

Residue 220–224 (GIGGT) coordinates CoA. Glutamate 245 serves as the catalytic 5-glutamyl coenzyme A thioester intermediate. Isoleucine 320 and glycine 343 together coordinate CoA.

The protein belongs to the acetyl-CoA hydrolase/transferase family.

Its subcellular location is the cytoplasm. It catalyses the reaction butanoate + acetyl-CoA = butanoyl-CoA + acetate. It functions in the pathway lipid metabolism; butanoate metabolism. Its function is as follows. Coenzyme A-transferase that converts butyrate to butyryl-CoA. Involved in the syntrophic growth of S.wolfei on butyrate in cooperation with methanogens or an appropriate hydrogen-scavenging bacterium, as part of the butyrate oxidation pathway. The sequence is that of Probable butyrate:acetyl-CoA coenzyme A-transferase from Syntrophomonas wolfei subsp. wolfei (strain DSM 2245B / Goettingen).